Here is a 74-residue protein sequence, read N- to C-terminus: UPF0435 protein BCB4264_A0471 (74 aa).

It belongs to the UPF0435 family.

In Bacillus cereus (strain B4264), this protein is UPF0435 protein BCB4264_A0471.